Consider the following 508-residue polypeptide: NADH-quinone oxidoreductase subunit N 1 (508 aa).

13 helical membrane-spanning segments follow: residues 2–22, 47–67, 87–107, 126–146, 175–195, 220–240, 260–280, 291–311, 321–341, 351–371, 396–416, 431–453, and 479–499; these read ILGP…GALL, ALGT…VGFV, FTLF…LLAG, FSTV…LFLG, FLLG…IYGA, ALLL…VSAV, FMAV…LLGA, AGWP…ANLI, MLAY…AATV, VMFY…TLIL, ALAF…AGFF, YTLS…RVLV, and LVVS…SLGI.

This sequence belongs to the complex I subunit 2 family. In terms of assembly, NDH-1 is composed of 14 different subunits. Subunits NuoA, H, J, K, L, M, N constitute the membrane sector of the complex.

It is found in the cell inner membrane. It catalyses the reaction a quinone + NADH + 5 H(+)(in) = a quinol + NAD(+) + 4 H(+)(out). In terms of biological role, NDH-1 shuttles electrons from NADH, via FMN and iron-sulfur (Fe-S) centers, to quinones in the respiratory chain. The immediate electron acceptor for the enzyme in this species is believed to be ubiquinone. Couples the redox reaction to proton translocation (for every two electrons transferred, four hydrogen ions are translocated across the cytoplasmic membrane), and thus conserves the redox energy in a proton gradient. This is NADH-quinone oxidoreductase subunit N 1 from Sorangium cellulosum (strain So ce56) (Polyangium cellulosum (strain So ce56)).